The primary structure comprises 162 residues: Ribosomal RNA large subunit methyltransferase H (162 aa).

S-adenosyl-L-methionine is bound by residues Leu78, Gly109, and 128 to 133; that span reads LSPLTL.

This sequence belongs to the RNA methyltransferase RlmH family. In terms of assembly, homodimer.

Its subcellular location is the cytoplasm. The enzyme catalyses pseudouridine(1915) in 23S rRNA + S-adenosyl-L-methionine = N(3)-methylpseudouridine(1915) in 23S rRNA + S-adenosyl-L-homocysteine + H(+). Functionally, specifically methylates the pseudouridine at position 1915 (m3Psi1915) in 23S rRNA. The chain is Ribosomal RNA large subunit methyltransferase H from Psychrobacter sp. (strain PRwf-1).